Consider the following 306-residue polypeptide: Glutathione transport system permease protein GsiC (306 aa).

Topologically, residues 1–8 (MLNYVIKR) are cytoplasmic. Residues 9 to 29 (LLGLIPTLFIVSVLVFLFVHM) form a helical membrane-spanning segment. Topologically, residues 30 to 102 (LPGDPARLIA…SRFMPTLWLT (73 aa)) are periplasmic. The ABC transmembrane type-1 domain maps to 95–292 (FMPTLWLTIT…LEFILINLVV (198 aa)). The chain crosses the membrane as a helical span at residues 103 to 123 (ITSMVWAVIFGMAAGIIAAVW). Residues 124–134 (RNRWPDRLSMT) lie on the Cytoplasmic side of the membrane. A helical transmembrane segment spans residues 135–155 (IAVSGISFPAFALGMLLIQVF). The Periplasmic segment spans residues 156–168 (SVELGWLPTVGAD). A helical membrane pass occupies residues 169 to 189 (SWQHYILSSLTLGAAVAAVMA). At 190–228 (RFTRASFVDVLSEDYMRTARAKGVSETWVVLKHGLRNAM) the chain is on the cytoplasmic side. The chain crosses the membrane as a helical span at residues 229–249 (IPVVTMMGLQFGFLLGGSIVV). Residues 250 to 277 (EKVFNWPGLGRLLVDSVEMRDYPVIQAE) lie on the Periplasmic side of the membrane. The chain crosses the membrane as a helical span at residues 278–298 (ILLFSLEFILINLVVDVLYAA). Residues 299–306 (INPAIRYK) are Cytoplasmic-facing.

The protein belongs to the binding-protein-dependent transport system permease family. The complex is composed of two ATP-binding proteins (GsiA), two transmembrane proteins (GsiC and GsiD) and a solute-binding protein (GsiB).

The protein localises to the cell inner membrane. Part of the ABC transporter complex GsiABCD involved in glutathione import. Probably responsible for the translocation of the substrate across the membrane. This chain is Glutathione transport system permease protein GsiC, found in Shigella boydii serotype 4 (strain Sb227).